The primary structure comprises 428 residues: METIFALATAQGKAGVAVIRVSGPHAIEIGEKLTRRTLPARGMIFSKLKDSAGEILDEALVLSFTSPDSFTGENIVEFQLHGSIAVVSAVMSAIEETGVARLADPGEFTRRALDNGKLDLTQVEGLADLIDAETEAQRKQAQVILAGTLGDLADRWRTDLIRAASLIEVTIDFADEEVPVDVTPEVKQLLSGVLHDIEKEVDGVAIAERIREGFEVAIVGSPNVGKSTLLNALAGRTAAITSEYAGTTRDVIEVRMDLAGLPVTLLDTAGLRETDDHVEGIGIRLAQERAERADIRVFLAEEDESFSIQMREGDLRLLPKADERRSAKGAISGRTGQGVDDLVSRISDTLRNRTAHDGIATRARHRETMNRAVLSLRQAIEVVEQGPEFYDLAAEDMRSAIRALELLVGRINVENLLDEIFSSFCLGK.

(6S)-5-formyl-5,6,7,8-tetrahydrofolate is bound by residues Arg-20, Glu-77, and Lys-117. Residues 213 to 351 (GFEVAIVGSP…LVSRISDTLR (139 aa)) form the TrmE-type G domain. Residues 223–228 (NVGKST), 242–248 (SEYAGTT), and 267–270 (DTAG) contribute to the GTP site. 2 residues coordinate Mg(2+): Ser-227 and Thr-248. Residue Lys-428 coordinates (6S)-5-formyl-5,6,7,8-tetrahydrofolate.

It belongs to the TRAFAC class TrmE-Era-EngA-EngB-Septin-like GTPase superfamily. TrmE GTPase family. As to quaternary structure, homodimer. Heterotetramer of two MnmE and two MnmG subunits. Requires K(+) as cofactor.

Its subcellular location is the cytoplasm. Exhibits a very high intrinsic GTPase hydrolysis rate. Involved in the addition of a carboxymethylaminomethyl (cmnm) group at the wobble position (U34) of certain tRNAs, forming tRNA-cmnm(5)s(2)U34. The protein is tRNA modification GTPase MnmE of Ruegeria sp. (strain TM1040) (Silicibacter sp.).